A 303-amino-acid chain; its full sequence is Methyltransferase ktnA (303 aa).

Belongs to the class I-like SAM-binding methyltransferase superfamily. The cofactor is S-adenosyl-L-methionine.

Functionally, non-reducing polyketide synthase; part of the gene cluster that mediates the biosynthesis of the bicoumarin kotanin. The non-reducing polyketide synthase ktnS first catalyzes the formation of the pentaketidic 4,7-dihydroxy-5-methylcoumarin from acetyl coenzyme A and 4 malonyl coenzyme A molecules. Further O-methylation by ktnB leads to the formation of 7-demethylsiderin. Then, an oxidative phenol coupling catalyzed by the cytochrome P450 monooxygenase ktnC forms the 8,8'-dimer P-orlandin via dimerization the monomeric precursor, 7-demethylsiderin. P-orlandin is subsequently O-methylated in a stepwise fashion to demethylkotanin and kotanin. The function of ktnA within the pathway has not been determined yet. The chain is Methyltransferase ktnA from Aspergillus niger (strain ATCC MYA-4892 / CBS 513.88 / FGSC A1513).